The following is a 346-amino-acid chain: Dihydroorotase (346 aa).

Zn(2+) contacts are provided by histidine 13 and histidine 15. Substrate is bound by residues 15-17 and asparagine 41; that span reads HLR. Lysine 99, histidine 136, and histidine 174 together coordinate Zn(2+). Lysine 99 carries the post-translational modification N6-carboxylysine. Substrate is bound at residue histidine 136. A substrate-binding site is contributed by leucine 219. Position 247 (aspartate 247) interacts with Zn(2+). The active site involves aspartate 247. Histidine 251 and alanine 263 together coordinate substrate.

This sequence belongs to the metallo-dependent hydrolases superfamily. DHOase family. Class II DHOase subfamily. In terms of assembly, homodimer. It depends on Zn(2+) as a cofactor.

It carries out the reaction (S)-dihydroorotate + H2O = N-carbamoyl-L-aspartate + H(+). It participates in pyrimidine metabolism; UMP biosynthesis via de novo pathway; (S)-dihydroorotate from bicarbonate: step 3/3. Catalyzes the reversible cyclization of carbamoyl aspartate to dihydroorotate. The polypeptide is Dihydroorotase (Picosynechococcus sp. (strain ATCC 27264 / PCC 7002 / PR-6) (Agmenellum quadruplicatum)).